Here is a 456-residue protein sequence, read N- to C-terminus: MDSRLQEIRERQKLRRQLLAQQLGAESADSIGALLNSKDEQREIAETRETCRASYDTSAPNAKRKYQDEGETDEDKMEEYKDELEMQQEEENLPYEEEIYKDSSTFLKGTQSLNPHNDYCQHFVDTGHRPQNFIRDVGLADRFEEYPKLRELIRLKDELIAKSNTPPMYLQADIEAFDIRELTPKFDVILLEPPLEEYYRETGITANEKCWTWDDIMKLEIDEIAAPRSFIFLWCGSGEGLDLGRVCLRKWGYRRCEDICWIKTNKNNPGKTKTLDPKAVFQRTKEHCLMGIKGTVKRSTDGDFIHANVDIDLIITEEPEIGNIEKPVEIFHIIEHFCLGRRRLHLFGRDSTIRPGWLTVGPTLTNSNYNAETYASYFSAPNSYLTGCTEEIERLRPKSPPPKSKSDRGGGAPRGGGRGGTSAGRGRERNRSNFRGERGGFRGGRGGAHRGGFPPR.

Residues 45-76 (AETRETCRASYDTSAPNAKRKYQDEGETDEDK) are disordered. Interaction with METTL3 stretches follow at residues 135 to 136 (RD) and 237 to 238 (SG). Positions 245–254 (RVCLRKWGYR) are positively charged region required for RNA-binding. Interaction with METTL3 regions lie at residues 255–258 (RCED) and 278–287 (KAVFQRTKEH). The positively charged region required for RNA-binding stretch occupies residues 297–298 (KR). The interaction with METTL3 stretch occupies residues 308–312 (NVDID). The tract at residues 393 to 456 (ERLRPKSPPP…GAHRGGFPPR (64 aa)) is disordered. At S399 the chain carries Phosphoserine. The segment covering 409-423 (GGGAPRGGGRGGTSA) has biased composition (gly residues). The segment covering 425 to 440 (RGRERNRSNFRGERGG) has biased composition (basic and acidic residues). The segment covering 441–450 (FRGGRGGAHR) has biased composition (gly residues).

It belongs to the MT-A70-like family. In terms of assembly, heterodimer; heterodimerizes with METTL3 to form an antiparallel heterodimer that constitutes an active methyltransferase. Component of the WMM complex, a N6-methyltransferase complex composed of a catalytic subcomplex, named MAC, and of an associated subcomplex, named MACOM. The MAC subcomplex is composed of METTL3 and METTL14. The MACOM subcomplex is composed of WTAP, ZC3H13, CBLL1/HAKAI, VIRMA, and, in some cases of RBM15 (RBM15 or RBM15B).

The protein resides in the nucleus. The METTL3-METTL14 heterodimer forms a N6-methyltransferase complex that methylates adenosine residues at the N(6) position of some mRNAs and regulates the circadian clock, differentiation of embryonic stem cells and cortical neurogenesis. In the heterodimer formed with METTL3, METTL14 constitutes the RNA-binding scaffold that recognizes the substrate rather than the catalytic core. N6-methyladenosine (m6A), which takes place at the 5'-[AG]GAC-3' consensus sites of some mRNAs, plays a role in mRNA stability and processing. M6A acts as a key regulator of mRNA stability by promoting mRNA destabilization and degradation. In embryonic stem cells (ESCs), m6A methylation of mRNAs encoding key naive pluripotency-promoting transcripts results in transcript destabilization. M6A regulates spermatogonial differentiation and meiosis and is essential for male fertility and spermatogenesis. M6A also regulates cortical neurogenesis: m6A methylation of transcripts related to transcription factors, neural stem cells, the cell cycle and neuronal differentiation during brain development promotes their destabilization and decay, promoting differentiation of radial glial cells. This Bos taurus (Bovine) protein is N(6)-adenosine-methyltransferase non-catalytic subunit METTL14 (METTL14).